Here is a 422-residue protein sequence, read N- to C-terminus: L-threonine dehydratase biosynthetic IlvA (422 aa).

Lys-56 is modified (N6-(pyridoxal phosphate)lysine). Pyridoxal 5'-phosphate is bound by residues Asn-83, 189 to 193 (GGGGL), and Ser-315. One can recognise an ACT-like domain in the interval 339 to 413 (HYFILNFPQR…FDPSNIYINE (75 aa)).

This sequence belongs to the serine/threonine dehydratase family. Homotetramer. It depends on pyridoxal 5'-phosphate as a cofactor.

The enzyme catalyses L-threonine = 2-oxobutanoate + NH4(+). Its pathway is amino-acid biosynthesis; L-isoleucine biosynthesis; 2-oxobutanoate from L-threonine: step 1/1. Catalyzes the anaerobic formation of alpha-ketobutyrate and ammonia from threonine in a two-step reaction. The first step involved a dehydration of threonine and a production of enamine intermediates (aminocrotonate), which tautomerizes to its imine form (iminobutyrate). Both intermediates are unstable and short-lived. The second step is the nonenzymatic hydrolysis of the enamine/imine intermediates to form 2-ketobutyrate and free ammonia. In the low water environment of the cell, the second step is accelerated by RidA. This chain is L-threonine dehydratase biosynthetic IlvA (ilvA), found in Staphylococcus aureus (strain Mu50 / ATCC 700699).